A 210-amino-acid chain; its full sequence is Somatotropin-1 (210 aa).

A signal peptide spans 1–22 (MARALVLLSVVLVSLLVNQGRA). His-38 provides a ligand contact to Zn(2+). A disulfide bond links Cys-71 and Cys-183. Position 192 (Glu-192) interacts with Zn(2+). Residues Cys-200 and Cys-208 are joined by a disulfide bond.

It belongs to the somatotropin/prolactin family.

It is found in the secreted. Functionally, growth hormone plays an important role in growth control and is involved in the regulation of several anabolic processes. Implicated as an osmoregulatory substance important for seawater adaptation. In Carassius auratus (Goldfish), this protein is Somatotropin-1 (gh1).